A 349-amino-acid chain; its full sequence is GDP-mannose:glycolipid 4-beta-D-mannosyltransferase (349 aa).

The signal sequence occupies residues 1–14; the sequence is MSASASLPVTRAAA.

Belongs to the glycosyltransferase 94 family.

The protein localises to the cell inner membrane. The catalysed reaction is beta-D-GlcA-(1-&gt;2)-alpha-D-Man-(1-&gt;3)-beta-D-Glc-(1-&gt;4)-alpha-D-Glc-di-trans,octa-cis-undecaprenyl diphosphate + GDP-alpha-D-mannose = beta-D-Man-(1-&gt;4)-beta-D-GlcA-(1-&gt;2)-alpha-D-Man-(1-&gt;3)-beta-D-Glc-(1-&gt;4)-alpha-D-Glc-di-trans,octa-cis-undecaprenyl diphosphate + GDP + H(+). Its pathway is glycan biosynthesis; xanthan biosynthesis. Functionally, nonprocessive beta-mannosyltransferase that catalyzes the transfer of a mannose residue from GDP-mannose to glucuronic acid-beta-1,2-mannose-alpha-1,3-glucose-beta-1,4-glucose-PP-polyisoprenyl to form the lipid-linked pentasaccharide repeating unit of xanthan, Man-GlcA-Man-Glc(2)-PP-Pol. Is involved in the biosynthesis of the exopolysaccharide xanthan. In Xanthomonas campestris pv. campestris (strain ATCC 33913 / DSM 3586 / NCPPB 528 / LMG 568 / P 25), this protein is GDP-mannose:glycolipid 4-beta-D-mannosyltransferase (gumI).